Consider the following 116-residue polypeptide: UPF0102 protein Neut_1662 (116 aa).

It belongs to the UPF0102 family.

In Nitrosomonas eutropha (strain DSM 101675 / C91 / Nm57), this protein is UPF0102 protein Neut_1662.